The sequence spans 37 residues: Omega-agatoxin-Aa3d (37 aa).

It belongs to the neurotoxin 04 (omega-agtx) family. 03 (type II/III omega-agtx) subfamily. Disulfide bonds are present. Expressed by the venom gland.

It is found in the secreted. Omega-agatoxins are antagonists of voltage-gated calcium channels. This toxin blocks calcium channels in insect central neurons but not at peripheral neuromuscular junctions. In vertebrates, it is broadly active against all high-threshold Cav1/CACNA1 channels and Cav2.2/CACNA1B channels. The sequence is that of Omega-agatoxin-Aa3d from Agelenopsis aperta (North American funnel-web spider).